Consider the following 443-residue polypeptide: Cysteine proteinase B (443 aa).

Residues 1-27 (MATSRAALCAVAVVCVVLAAACAPARA) form the signal peptide. The propeptide at 28–125 (IHVGTPAAAL…YRKARADLSA (98 aa)) is activation peptide. 2 disulfide bridges follow: Cys-147–Cys-188 and Cys-181–Cys-226. Cys-150 is a catalytic residue. The N-linked (GlcNAc...) asparagine glycan is linked to Asn-228. A disulfide bridge links Cys-281 with Cys-329. Catalysis depends on residues His-288 and Asn-308.

This sequence belongs to the peptidase C1 family.

This is Cysteine proteinase B (LMCPB) from Leishmania mexicana.